The following is a 655-amino-acid chain: MTECFLPPASSPSEHRRAEHGGGLARTPSSEEISPTKFPGLYRTGEPLPPHDILHEPPDIVSEDEKDHGKKKGKFKKKEKRTEGYAAFQEDSSGDEAESPSKIKRSKGIHVFKKPSFSKKKEKDFKIKEKPKEEKHKEDKHKEKKSKDLTAADVVKQWKEKKKKKKPTPEPESLPVDIPRLRPVFGIPLIEAAERTMIYDGIRLPLVFRECIDFIEQHGMKCEGIYRVSGIKSKVDELKAAYDREESPNLEDYEPYTVASLLKQYLRELPENVLTKDLMPRFEEACGKTTEGERLQECQRLLKELPECNFCLTSWLVVHMDHVIEQELETKMNIQNISIVLSPTVQISNRVLYVFFTHVQELFGGVQIKRVIKPLRWSNMATMPALPETQETIKEEIRRQEFLLNCLHRELQAGVKDLSKEERLWEVQRILTALKRKLREAKRQDCETKIAQEIASLSKEDVSKEEMTENEEEVLNILLAQENEILTEQEELVAMEQYLRRQIATEKEEIDRLRAEISEIQSRQQHGRSETEEYSSESESESEDEEELQYILEDLQRQNEELEIKNTHLNQAIHEEREAIIELRVQLRLLQKQRVKSEQLQEEEELGKQNVPSQLPRDNLPETKAPKDQPKALMEQMKPSPIKKTGKKLSSETLI.

The interval 1–153 is disordered; that stretch reads MTECFLPPAS…KKSKDLTAAD (153 aa). Residues 52-68 show a composition bias toward basic and acidic residues; sequence DILHEPPDIVSEDEKDH. An ATP-binding site is contributed by 69-74; it reads GKKKGK. Composition is skewed to basic residues over residues 69–79 and 102–118; these read GKKKGKFKKKE and KIKR…PSFS. Residues 102 to 119 form a nuclear localization signal region; that stretch reads KIKRSKGIHVFKKPSFSK. Residues 119-150 are compositionally biased toward basic and acidic residues; sequence KKKEKDFKIKEKPKEEKHKEDKHKEKKSKDLT. Repeat copies occupy residues 133 to 137 and 138 to 142. The tract at residues 133–142 is 2 X 5 AA tandem repeats of E-[D/E]-K-H-K; sequence EEKHKEDKHK. A mediates association with membranes and could form transmembrane domains region spans residues 149–214; it reads LTAADVVKQW…PLVFRECIDF (66 aa). The Rho-GAP domain maps to 187-383; it reads IPLIEAAERT…PLRWSNMATM (197 aa). The interval 398–495 is mediates interaction with RALA and RALB; sequence RRQEFLLNCL…LTEQEELVAM (98 aa). 413–420 contributes to the ATP binding site; the sequence is AGVKDLSK. Residues 494 to 510 form a required to maintain nuclear localization region; the sequence is AMEQYLRRQIATEKEEI. The interval 496–655 is mediates interaction with REPS1 and REPS2; the sequence is EQYLRRQIAT…GKKLSSETLI (160 aa). 2 disordered regions span residues 520–548 and 600–655; these read IQSR…EEEL and LQEE…ETLI. Residues 532-548 show a composition bias toward acidic residues; the sequence is EEYSSESESESEDEEEL. Over residues 619-630 the composition is skewed to basic and acidic residues; the sequence is NLPETKAPKDQP.

In terms of assembly, interacts with the active, GTP-bound form of ralB and ralA.

The protein resides in the cell membrane. It is found in the cytoplasm. It localises to the cytosol. Its subcellular location is the cytoskeleton. The protein localises to the spindle pole. The protein resides in the nucleus. It is found in the mitochondrion. It localises to the cell projection. Its subcellular location is the lamellipodium. It carries out the reaction an S-substituted glutathione(in) + ATP + H2O = an S-substituted glutathione(out) + ADP + phosphate + H(+). The enzyme catalyses ATP + H2O + xenobioticSide 1 = ADP + phosphate + xenobioticSide 2.. The catalysed reaction is leukotriene C4(in) + ATP + H2O = leukotriene C4(out) + ADP + phosphate + H(+). In terms of biological role, multifunctional protein that functions as a downstream effector of ralA and ralB. As a GTPase-activating protein/GAP can inactivate CDC42 and RAC1 by stimulating their GTPase activity. As part of the Ral signaling pathway, may also regulate ligand-dependent EGF and insulin receptors-mediated endocytosis. During mitosis, may act as a scaffold protein in the phosphorylation of EPSIN/EPN1 by the mitotic kinase cyclin B-CDK1, preventing endocytosis during that phase of the cell cycle. During mitosis, also controls mitochondrial fission as an effector of ralA. Recruited to mitochondrion by ralA, acts as a scaffold to foster the mitotic kinase cyclin B-CDK1-mediated phosphorylation and activation of DNM1L. Acts on the cytoskeleton, to regulate pigment distribution and to regulate gastrulation. Could also function as a primary ATP-dependent active transporter for glutathione conjugates of electrophiles. May also actively catalyze the efflux of a wide range of substrates including xenobiotics like doxorubicin (DOX) contributing to cell multidrug resistance. The polypeptide is RalA-binding protein 1-A (ralbp1-a) (Xenopus laevis (African clawed frog)).